Reading from the N-terminus, the 587-residue chain is 5-aminolevulinate synthase, erythroid-specific, mitochondrial (587 aa).

Residues 1–49 (MVAAAMLLRSCPVLSKGPTGLLGKVAKTYQFLFGIGRCPILATQGPTCS) constitute a mitochondrion transit peptide. A succinyl-CoA-binding site is contributed by arginine 163. Residues cysteine 258 and phenylalanine 259 each coordinate pyridoxal 5'-phosphate. 2 residues coordinate succinyl-CoA: serine 280 and lysine 299. Positions 332, 360, and 388 each coordinate pyridoxal 5'-phosphate. Residue lysine 391 is part of the active site. N6-(pyridoxal phosphate)lysine is present on lysine 391. Positions 420 and 421 each coordinate pyridoxal 5'-phosphate. A succinyl-CoA-binding site is contributed by threonine 508.

The protein belongs to the class-II pyridoxal-phosphate-dependent aminotransferase family. In terms of assembly, homodimer. Interacts with SUCLA2. Requires pyridoxal 5'-phosphate as cofactor. As to expression, erythroid-specific.

It localises to the mitochondrion inner membrane. It catalyses the reaction succinyl-CoA + glycine + H(+) = 5-aminolevulinate + CO2 + CoA. The protein operates within porphyrin-containing compound metabolism; protoporphyrin-IX biosynthesis; 5-aminolevulinate from glycine: step 1/1. Catalyzes the pyridoxal 5'-phosphate (PLP)-dependent condensation of succinyl-CoA and glycine to form aminolevulinic acid (ALA), with CoA and CO2 as by-products. Contributes significantly to heme formation during erythropoiesis. This Rattus norvegicus (Rat) protein is 5-aminolevulinate synthase, erythroid-specific, mitochondrial (Alas2).